A 396-amino-acid polypeptide reads, in one-letter code: Elongation factor Tu 1 (396 aa).

Positions 10-206 (KPHVNVGTIG…ALDTYIPTPE (197 aa)) constitute a tr-type G domain. The G1 stretch occupies residues 19-26 (GHVDHGKT). GTP is bound at residue 19-26 (GHVDHGKT). T26 contacts Mg(2+). The tract at residues 60–64 (GITIN) is G2. Positions 81-84 (DCPG) are G3. GTP-binding positions include 81–85 (DCPGH) and 136–139 (NKAD). Positions 136-139 (NKAD) are G4. Positions 174–176 (SAK) are G5.

This sequence belongs to the TRAFAC class translation factor GTPase superfamily. Classic translation factor GTPase family. EF-Tu/EF-1A subfamily. As to quaternary structure, monomer.

Its subcellular location is the cytoplasm. It carries out the reaction GTP + H2O = GDP + phosphate + H(+). Its function is as follows. GTP hydrolase that promotes the GTP-dependent binding of aminoacyl-tRNA to the A-site of ribosomes during protein biosynthesis. The sequence is that of Elongation factor Tu 1 from Methylobacillus flagellatus (strain ATCC 51484 / DSM 6875 / VKM B-1610 / KT).